Here is a 20-residue protein sequence, read N- to C-terminus: T cell receptor alpha joining 3 (20 aa).

Alpha-beta TR is a heterodimer composed of an alpha and beta chain; disulfide-linked. The alpha-beta TR is associated with the transmembrane signaling CD3 coreceptor proteins to form the TR-CD3 (TcR or TCR). The assembly of alpha-beta TR heterodimers with CD3 occurs in the endoplasmic reticulum where a single alpha-beta TR heterodimer associates with one CD3D-CD3E heterodimer, one CD3G-CD3E heterodimer and one CD247 homodimer forming a stable octameric structure. CD3D-CD3E and CD3G-CD3E heterodimers preferentially associate with TR alpha and TR beta chains, respectively. The association of the CD247 homodimer is the last step of TcR assembly in the endoplasmic reticulum and is required for transport to the cell surface.

It localises to the cell membrane. Functionally, j region of the variable domain of T cell receptor (TR) alpha chain that participates in the antigen recognition. Alpha-beta T cell receptors are antigen specific receptors which are essential to the immune response and are present on the cell surface of T lymphocytes. Recognize peptide-major histocompatibility (MH) (pMH) complexes that are displayed by antigen presenting cells (APC), a prerequisite for efficient T cell adaptive immunity against pathogens. Binding of alpha-beta TR to pMH complex initiates TR-CD3 clustering on the cell surface and intracellular activation of LCK that phosphorylates the ITAM motifs of CD3G, CD3D, CD3E and CD247 enabling the recruitment of ZAP70. In turn ZAP70 phosphorylates LAT, which recruits numerous signaling molecules to form the LAT signalosome. The LAT signalosome propagates signal branching to three major signaling pathways, the calcium, the mitogen-activated protein kinase (MAPK) kinase and the nuclear factor NF-kappa-B (NF-kB) pathways, leading to the mobilization of transcription factors that are critical for gene expression and essential for T cell growth and differentiation. The T cell repertoire is generated in the thymus, by V-(D)-J rearrangement. This repertoire is then shaped by intrathymic selection events to generate a peripheral T cell pool of self-MH restricted, non-autoaggressive T cells. Post-thymic interaction of alpha-beta TR with the pMH complexes shapes TR structural and functional avidity. This Homo sapiens (Human) protein is T cell receptor alpha joining 3.